The following is a 345-amino-acid chain: Achaete-scute complex protein T4 (345 aa).

The span at 78–92 (SESVSSLSPGSSPAP) shows a compositional bias: low complexity. The tract at residues 78 to 109 (SESVSSLSPGSSPAPYNVDQSQSVQRRNARER) is disordered. In terms of domain architecture, bHLH spans 99–162 (QSVQRRNARE…RIAVEYIRRL (64 aa)).

As to quaternary structure, efficient DNA binding requires dimerization with another bHLH protein. Interacts with da (via bHLH motif). Interacts with Bap60. As to expression, l(1)SC, SC and AC strongly label the presumptive stomatogastric nervous system, while ASE is more prominent in the presumptive procephalic lobe. Associates with the somatic nuclei through nuclear cycles 9 and 10. During nuclear cycle 11 distributes uniformly in the embryo.

AS-C proteins are involved in the determination of the neuronal precursors in the peripheral nervous system and the central nervous system. Also involved in sex determination and dosage compensation. The sequence is that of Achaete-scute complex protein T4 (sc) from Drosophila melanogaster (Fruit fly).